The chain runs to 238 residues: Serine protease SplE (238 aa).

Positions 1-36 are cleaved as a signal peptide; the sequence is MNKNIIIKSIAALTILTSVTGVGTTVVEGIQQTAKA. Active-site charge relay system residues include H75, D113, and S191.

The protein belongs to the peptidase S1B family.

The protein localises to the secreted. The chain is Serine protease SplE (splE) from Staphylococcus aureus (strain USA300).